A 358-amino-acid chain; its full sequence is 3-isopropylmalate dehydrogenase (358 aa).

An NAD(+)-binding site is contributed by 77–90 (GPKWTNLPPDQQPE). Residues R98, R108, R137, and D226 each contribute to the substrate site. Positions 226, 250, and 254 each coordinate Mg(2+). Residue 284-296 (GSAPDIAGKGIAN) participates in NAD(+) binding.

The protein belongs to the isocitrate and isopropylmalate dehydrogenases family. LeuB type 1 subfamily. As to quaternary structure, homodimer. Mg(2+) serves as cofactor. The cofactor is Mn(2+).

Its subcellular location is the cytoplasm. It carries out the reaction (2R,3S)-3-isopropylmalate + NAD(+) = 4-methyl-2-oxopentanoate + CO2 + NADH. It participates in amino-acid biosynthesis; L-leucine biosynthesis; L-leucine from 3-methyl-2-oxobutanoate: step 3/4. Functionally, catalyzes the oxidation of 3-carboxy-2-hydroxy-4-methylpentanoate (3-isopropylmalate) to 3-carboxy-4-methyl-2-oxopentanoate. The product decarboxylates to 4-methyl-2 oxopentanoate. This Haemophilus influenzae (strain 86-028NP) protein is 3-isopropylmalate dehydrogenase.